The following is a 289-amino-acid chain: ATP synthase subunit a (289 aa).

6 consecutive transmembrane segments (helical) span residues 43–63 (AFHV…VLIF), 101–121 (SAVI…MNAV), 160–180 (LSVF…GGFI), 193–213 (LFVQ…TLIA), 232–252 (VFIL…GLGV), and 259–279 (AVFH…LTIV).

The protein belongs to the ATPase A chain family. As to quaternary structure, F-type ATPases have 2 components, CF(1) - the catalytic core - and CF(0) - the membrane proton channel. CF(1) has five subunits: alpha(3), beta(3), gamma(1), delta(1), epsilon(1). CF(0) has three main subunits: a(1), b(2) and c(9-12). The alpha and beta chains form an alternating ring which encloses part of the gamma chain. CF(1) is attached to CF(0) by a central stalk formed by the gamma and epsilon chains, while a peripheral stalk is formed by the delta and b chains.

It localises to the cell inner membrane. Key component of the proton channel; it plays a direct role in the translocation of protons across the membrane. This chain is ATP synthase subunit a, found in Pseudomonas savastanoi pv. phaseolicola (strain 1448A / Race 6) (Pseudomonas syringae pv. phaseolicola (strain 1448A / Race 6)).